A 374-amino-acid chain; its full sequence is Dihydroorotate dehydrogenase (quinone) (374 aa).

FMN contacts are provided by residues 78 to 82 (AGFDK) and Thr-102. Lys-82 lines the substrate pocket. Residue 127-131 (NRMGF) participates in substrate binding. Residues Asn-159 and Asn-192 each coordinate FMN. Asn-192 serves as a coordination point for substrate. Catalysis depends on Ser-195, which acts as the Nucleophile. Asn-197 contacts substrate. The FMN site is built by Lys-230 and Thr-258. Substrate is bound at residue 259–260 (NT). Residues Gly-287, Gly-316, and 337–338 (YT) contribute to the FMN site.

This sequence belongs to the dihydroorotate dehydrogenase family. Type 2 subfamily. Monomer. The cofactor is FMN.

The protein localises to the cell membrane. It catalyses the reaction (S)-dihydroorotate + a quinone = orotate + a quinol. Its pathway is pyrimidine metabolism; UMP biosynthesis via de novo pathway; orotate from (S)-dihydroorotate (quinone route): step 1/1. Functionally, catalyzes the conversion of dihydroorotate to orotate with quinone as electron acceptor. This chain is Dihydroorotate dehydrogenase (quinone), found in Acaryochloris marina (strain MBIC 11017).